Here is a 148-residue protein sequence, read N- to C-terminus: Ribonuclease H (148 aa).

The region spanning 3–144 is the RNase H type-1 domain; the sequence is DKEQVVIYTD…ADQLANRGVA (142 aa). The Mg(2+) site is built by Asp12, Glu50, Asp72, and Asp136. The tract at residues 125-148 is disordered; the sequence is GHTGDPGNERADQLANRGVAELPR.

It belongs to the RNase H family. Monomer. The cofactor is Mg(2+).

Its subcellular location is the cytoplasm. The enzyme catalyses Endonucleolytic cleavage to 5'-phosphomonoester.. Its function is as follows. Endonuclease that specifically degrades the RNA of RNA-DNA hybrids. This chain is Ribonuclease H, found in Pseudomonas paraeruginosa (strain DSM 24068 / PA7) (Pseudomonas aeruginosa (strain PA7)).